The primary structure comprises 211 residues: Uridine kinase (211 aa).

Residue 12–19 (GGSGSGKT) participates in ATP binding.

The protein belongs to the uridine kinase family.

It is found in the cytoplasm. The enzyme catalyses uridine + ATP = UMP + ADP + H(+). It catalyses the reaction cytidine + ATP = CMP + ADP + H(+). It functions in the pathway pyrimidine metabolism; CTP biosynthesis via salvage pathway; CTP from cytidine: step 1/3. Its pathway is pyrimidine metabolism; UMP biosynthesis via salvage pathway; UMP from uridine: step 1/1. The protein is Uridine kinase of Bacillus velezensis (strain DSM 23117 / BGSC 10A6 / LMG 26770 / FZB42) (Bacillus amyloliquefaciens subsp. plantarum).